A 320-amino-acid polypeptide reads, in one-letter code: NAC domain-containing protein 20 (320 aa).

The NAC domain maps to 14 to 170; the sequence is LPPGFRFHPT…DWAVCRIFHK (157 aa). The DNA-binding element occupies 114–176; sequence IGMKKTLVFY…IFHKSSGIKK (63 aa).

Forms homodimers. Forms heterodimers with NAC26. In terms of tissue distribution, expressed in developing seeds.

It localises to the nucleus. It is found in the endoplasmic reticulum. Transcription factor that acts redundantly with NAC26 to regulate the expression of genes involved in the biosynthesis of starch and storage proteins in grain. Directly binds to the promoters of starch synthase 1 (SS1), pullulanase (PUL), glutelin A1 (GLUA1), glutelins B4 and B5 (GLUB4 and GLUB5), alpha-globulin and 16 kDa prolamin, and activates their expression. Possesses transactivation activity in yeast. This chain is NAC domain-containing protein 20, found in Oryza sativa subsp. indica (Rice).